We begin with the raw amino-acid sequence, 350 residues long: Biotin synthase (350 aa).

Positions 38–256 (NHVQVSTLLS…IAVARIMMPK (219 aa)) constitute a Radical SAM core domain. [4Fe-4S] cluster-binding residues include Cys53, Cys57, and Cys60. The [2Fe-2S] cluster site is built by Cys97, Cys128, Cys188, and Arg260.

Belongs to the radical SAM superfamily. Biotin synthase family. In terms of assembly, homodimer. It depends on [4Fe-4S] cluster as a cofactor. [2Fe-2S] cluster serves as cofactor.

The catalysed reaction is (4R,5S)-dethiobiotin + (sulfur carrier)-SH + 2 reduced [2Fe-2S]-[ferredoxin] + 2 S-adenosyl-L-methionine = (sulfur carrier)-H + biotin + 2 5'-deoxyadenosine + 2 L-methionine + 2 oxidized [2Fe-2S]-[ferredoxin]. It functions in the pathway cofactor biosynthesis; biotin biosynthesis; biotin from 7,8-diaminononanoate: step 2/2. Its function is as follows. Catalyzes the conversion of dethiobiotin (DTB) to biotin by the insertion of a sulfur atom into dethiobiotin via a radical-based mechanism. This Vibrio cholerae serotype O1 (strain ATCC 39541 / Classical Ogawa 395 / O395) protein is Biotin synthase.